The primary structure comprises 580 residues: NADH-ubiquinone oxidoreductase chain 5 (580 aa).

Helical transmembrane passes span 12–32, 50–70, 92–112, 113–133, 153–173, 176–196, 218–240, 249–269, 274–294, 300–320, 343–363, 378–400, 427–447, 464–484, 500–520, and 560–580; these read FYIL…FLLM, IVMT…VLLI, ILLV…PNLI, SILL…IYFQ, VALL…YIFY, MMKN…AAMT, SALV…FNIL, FLLL…NFEF, IIAL…SIGY, FHLL…GVII, CSCF…AGFY, NFFS…FRLV, IFFL…LMFF, MVCL…FFFI, MWFM…ILGM, and IYLL…LFLN.

Belongs to the complex I subunit 5 family.

The protein localises to the mitochondrion inner membrane. The enzyme catalyses a ubiquinone + NADH + 5 H(+)(in) = a ubiquinol + NAD(+) + 4 H(+)(out). Core subunit of the mitochondrial membrane respiratory chain NADH dehydrogenase (Complex I) that is believed to belong to the minimal assembly required for catalysis. Complex I functions in the transfer of electrons from NADH to the respiratory chain. The immediate electron acceptor for the enzyme is believed to be ubiquinone. The protein is NADH-ubiquinone oxidoreductase chain 5 of Aedes aegypti (Yellowfever mosquito).